We begin with the raw amino-acid sequence, 438 residues long: Mannose-1-phosphate guanylyltransferase regulatory subunit alpha (438 aa).

The interval 2–260 is substrate-binding domain; that stretch reads LKAVILIGGP…PNWWSQLKTA (259 aa). GDP-alpha-D-mannose is bound by residues glutamate 87 and glutamine 256. The interval 282-438 is hexapeptide repeat domain; that stretch reads LANVGIKRGE…SRSFKNEIIL (157 aa). Residues 373 to 402 are C-loop; it reads TPSDPDPNKPFAKMENPPLFNNEGKLNPSI.

It belongs to the transferase hexapeptide repeat family. In terms of assembly, component of the GMPPA-GMPPB mannose-1-phosphate guanylyltransferase complex composed of 4 GMPPA subunits and 8 GMPPB subunits; the complex is organized into three layers, a central layer made up of 2 GMPPA dimers sandwiched between two layers each made up of 2 GMPPB dimers.

Functionally, regulatory subunit of the GMPPA-GMPPB mannose-1-phosphate guanylyltransferase complex; reduces the catalytic activity of GMPPB when part of the complex. Mediates allosteric feedback inhibition of GMPPB catalytic activity upon binding GDP-alpha-D-mannose. Together with GMPPB regulates GDP-alpha-D-mannose levels. This Drosophila melanogaster (Fruit fly) protein is Mannose-1-phosphate guanylyltransferase regulatory subunit alpha.